The chain runs to 276 residues: Putative phosphoenolpyruvate synthase regulatory protein (276 aa).

156-163 (GVSRSGKT) serves as a coordination point for ADP.

The protein belongs to the pyruvate, phosphate/water dikinase regulatory protein family. PSRP subfamily.

The catalysed reaction is [pyruvate, water dikinase] + ADP = [pyruvate, water dikinase]-phosphate + AMP + H(+). It catalyses the reaction [pyruvate, water dikinase]-phosphate + phosphate + H(+) = [pyruvate, water dikinase] + diphosphate. In terms of biological role, bifunctional serine/threonine kinase and phosphorylase involved in the regulation of the phosphoenolpyruvate synthase (PEPS) by catalyzing its phosphorylation/dephosphorylation. The polypeptide is Putative phosphoenolpyruvate synthase regulatory protein (Acidovorax ebreus (strain TPSY) (Diaphorobacter sp. (strain TPSY))).